A 259-amino-acid chain; its full sequence is Troponin T, fast skeletal muscle (259 aa).

Over residues 1-36 (MSDEETEQVEEQYEEEEEAQEEEVQEEAPEPEEVQE) the composition is skewed to acidic residues. Positions 1–62 (MSDEETEQVE…EKVDFDDIQK (62 aa)) are disordered. Ser-2 carries the N-acetylserine modification. The residue at position 2 (Ser-2) is a Phosphoserine. Positions 50 to 62 (PEGEKVDFDDIQK) are enriched in basic and acidic residues. At Ser-78 the chain carries Phosphoserine. Positions 101–143 (RAERAEQQRIRAEKERERQNRLAEEKARREEEDAKRRAEDDLK) are enriched in basic and acidic residues. Residues 101-180 (RAERAEQQRI…TAREMKKKIL (80 aa)) form a disordered region. A phosphoserine mark is found at Ser-149, Ser-156, and Ser-157. Residues 171 to 180 (TAREMKKKIL) are compositionally biased toward basic and acidic residues. Phosphoserine is present on Ser-193. Phosphotyrosine is present on Tyr-209. The segment at 235-259 (RIDQAQKHSKKAGATAKGKVGGRWK) is disordered.

The protein belongs to the troponin T family.

Troponin T is the tropomyosin-binding subunit of troponin, the thin filament regulatory complex which confers calcium-sensitivity to striated muscle actomyosin ATPase activity. The chain is Troponin T, fast skeletal muscle (Tnnt3) from Rattus norvegicus (Rat).